We begin with the raw amino-acid sequence, 34 residues long: MSDIN-like toxin proprotein 4 (34 aa).

Positions 1–10 (MSDINATRLP) are excised as a propeptide. A cross-link (cyclopeptide (Val-Pro)) is located at residues 11 to 17 (VWIGYSP). Residues 18–34 (CVGDDCIALLTRGEGLC) constitute a propeptide that is removed on maturation.

Belongs to the MSDIN fungal toxin family. Post-translationally, processed by the macrocyclase-peptidase enzyme POPB to yield a toxic cyclic heptapeptide. POPB first removes 10 residues from the N-terminus. Conformational trapping of the remaining peptide forces the enzyme to release this intermediate rather than proceed to macrocyclization. The enzyme rebinds the remaining peptide in a different conformation and catalyzes macrocyclization of the N-terminal 7 residues. As to expression, expressed in basidiocarps.

Functionally, probable toxin that belongs to the MSDIN-like toxin family responsible for a large number of food poisoning cases and deaths. The polypeptide is MSDIN-like toxin proprotein 4 (Amanita exitialis (Guangzhou destroying angel)).